The following is a 504-amino-acid chain: 2,3-bisphosphoglycerate-independent phosphoglycerate mutase (504 aa).

Mn(2+) is bound by residues Asp-9 and Ser-59. Ser-59 acts as the Phosphoserine intermediate in catalysis. Residues His-120, 149-150, Arg-181, Arg-187, 253-256, and Lys-326 each bind substrate; these read RD and RPDR. Mn(2+)-binding residues include Asp-393, His-397, Asp-434, His-435, and His-451.

The protein belongs to the BPG-independent phosphoglycerate mutase family. Mn(2+) is required as a cofactor.

It catalyses the reaction (2R)-2-phosphoglycerate = (2R)-3-phosphoglycerate. Its pathway is carbohydrate degradation; glycolysis; pyruvate from D-glyceraldehyde 3-phosphate: step 3/5. In terms of biological role, catalyzes the interconversion of 2-phosphoglycerate and 3-phosphoglycerate. The protein is 2,3-bisphosphoglycerate-independent phosphoglycerate mutase of Haloquadratum walsbyi (strain DSM 16790 / HBSQ001).